We begin with the raw amino-acid sequence, 446 residues long: Light-independent protochlorophyllide reductase subunit N (446 aa).

Positions 22, 47, and 107 each coordinate [4Fe-4S] cluster.

Belongs to the BchN/ChlN family. As to quaternary structure, protochlorophyllide reductase is composed of three subunits; ChlL, ChlN and ChlB. Forms a heterotetramer of two ChlB and two ChlN subunits. Requires [4Fe-4S] cluster as cofactor.

The protein localises to the plastid. It is found in the chloroplast. The enzyme catalyses chlorophyllide a + oxidized 2[4Fe-4S]-[ferredoxin] + 2 ADP + 2 phosphate = protochlorophyllide a + reduced 2[4Fe-4S]-[ferredoxin] + 2 ATP + 2 H2O. It participates in porphyrin-containing compound metabolism; chlorophyll biosynthesis (light-independent). Its function is as follows. Component of the dark-operative protochlorophyllide reductase (DPOR) that uses Mg-ATP and reduced ferredoxin to reduce ring D of protochlorophyllide (Pchlide) to form chlorophyllide a (Chlide). This reaction is light-independent. The NB-protein (ChlN-ChlB) is the catalytic component of the complex. This is Light-independent protochlorophyllide reductase subunit N from Mesostigma viride (Green alga).